Consider the following 498-residue polypeptide: UDP-N-acetylmuramoylalanine--D-glutamate ligase (498 aa).

ATP is bound at residue 119 to 125 (GTNGKST).

It belongs to the MurCDEF family.

Its subcellular location is the cytoplasm. It carries out the reaction UDP-N-acetyl-alpha-D-muramoyl-L-alanine + D-glutamate + ATP = UDP-N-acetyl-alpha-D-muramoyl-L-alanyl-D-glutamate + ADP + phosphate + H(+). Its pathway is cell wall biogenesis; peptidoglycan biosynthesis. Functionally, cell wall formation. Catalyzes the addition of glutamate to the nucleotide precursor UDP-N-acetylmuramoyl-L-alanine (UMA). In Wolbachia sp. subsp. Brugia malayi (strain TRS), this protein is UDP-N-acetylmuramoylalanine--D-glutamate ligase.